Consider the following 341-residue polypeptide: 2-keto-4-carboxy-3-hexenedioate hydratase (341 aa).

2 residues coordinate Zn(2+): histidine 8 and histidine 10. 71 to 73 (RAS) contributes to the substrate binding site. Histidine 178 contributes to the Zn(2+) binding site. Substrate contacts are provided by tyrosine 194 and histidine 223. The active-site Proton donor/acceptor is the glutamate 284. Arginine 290 serves as a coordination point for substrate.

It belongs to the metallo-dependent hydrolases superfamily. In terms of assembly, homodimer. Zn(2+) serves as cofactor.

The catalysed reaction is (3Z)-2-oxo-4-carboxy-3-hexenedioate + H2O = (2S)-2-hydroxy-4-oxobutane-1,2,4-tricarboxylate. It participates in secondary metabolite metabolism; lignin degradation. In terms of biological role, contributes to the degradation of lignin at the level of the protocatechuate 4,5-cleavage pathway. Catalyzes the hydration of the double bond of (3Z)-2-keto-4-carboxy-3-hexenedioate (KCH) to (4S)-4-carboxy-4-hydroxy-2-oxoadipate (CHA, also named (2S)-2-hydroxy-4-oxobutane-1,2,4-tricarboxylate). Is involved in the catabolism of both vanillate and syringate. In Sphingobium sp. (strain NBRC 103272 / SYK-6), this protein is 2-keto-4-carboxy-3-hexenedioate hydratase.